A 785-amino-acid polypeptide reads, in one-letter code: Endonuclease MutS2 (785 aa).

335–342 (GPNTGGKT) contacts ATP. Residues 710–785 (LDLRGERYED…GNGVTIVEFK (76 aa)) enclose the Smr domain.

It belongs to the DNA mismatch repair MutS family. MutS2 subfamily. In terms of assembly, homodimer. Binds to stalled ribosomes, contacting rRNA.

In terms of biological role, endonuclease that is involved in the suppression of homologous recombination and thus may have a key role in the control of bacterial genetic diversity. Functionally, acts as a ribosome collision sensor, splitting the ribosome into its 2 subunits. Detects stalled/collided 70S ribosomes which it binds and splits by an ATP-hydrolysis driven conformational change. Acts upstream of the ribosome quality control system (RQC), a ribosome-associated complex that mediates the extraction of incompletely synthesized nascent chains from stalled ribosomes and their subsequent degradation. Probably generates substrates for RQC. This Listeria monocytogenes serotype 4a (strain HCC23) protein is Endonuclease MutS2.